A 515-amino-acid chain; its full sequence is MATTLNPSEISDLIKTRIEAVKLSAESRNEGSVTSVSDGIVRIFGLADVMQGEMIELPNNTFALALNLERDSVGAVVLGDYENLREGDVAKTTGRILEVPVGPELLGRVVNALGEPIDGKGPLGATQTAPVERVAPGVIWRKSVDQPVQTGYKSVDAMIPIGRGQRELVIGDRQTGKTALAIDAVINQKGTGIKCVYVAIGQKASTVANIVRKLEENGALAHTVVVAATASESAAMQYISPYAGCTMGEYFMDRGEDALIVYDDLSKQAVAYRQISLLLKRPPGREAYPGDVFYLHSRLLERAARVSEDYVEKFTNGAVTGKTGSLTALPIIETQAGDVSAFVPTNVISITDGQIFLETDLFNAGIRPAVNAGISVSRVGGAAQTKIIKKLSGGIRISLAQYRELAAFAQFASDLDEATRKQLERGQRVTELMKQKQYAPMSIANQALSIYAVNEGYLDDVPVNKLLAFEEGLHAHFANTQGELVSKINSTGGWDNDIEASFKKGIQEFKTTGTW.

171-178 (GDRQTGKT) lines the ATP pocket.

Belongs to the ATPase alpha/beta chains family. F-type ATPases have 2 components, CF(1) - the catalytic core - and CF(0) - the membrane proton channel. CF(1) has five subunits: alpha(3), beta(3), gamma(1), delta(1), epsilon(1). CF(0) has three main subunits: a(1), b(2) and c(9-12). The alpha and beta chains form an alternating ring which encloses part of the gamma chain. CF(1) is attached to CF(0) by a central stalk formed by the gamma and epsilon chains, while a peripheral stalk is formed by the delta and b chains.

Its subcellular location is the cell inner membrane. The catalysed reaction is ATP + H2O + 4 H(+)(in) = ADP + phosphate + 5 H(+)(out). In terms of biological role, produces ATP from ADP in the presence of a proton gradient across the membrane. The alpha chain is a regulatory subunit. This is ATP synthase subunit alpha from Xanthomonas oryzae pv. oryzae (strain MAFF 311018).